The sequence spans 343 residues: Type II restriction enzyme BsuMI component YdiS (343 aa).

As to quaternary structure, bsuMI restriction activity requires YdiR, YdiS and YdjA.

It catalyses the reaction Endonucleolytic cleavage of DNA to give specific double-stranded fragments with terminal 5'-phosphates.. Its function is as follows. A P subtype restriction enzyme that recognizes the double-stranded sequence 5'-CTCGAG-3'; the cleavage site is unknown. The sequence is that of Type II restriction enzyme BsuMI component YdiS (ydiS) from Bacillus subtilis (strain 168).